Consider the following 186-residue polypeptide: UPF0301 protein Daro_3893 (186 aa).

Belongs to the UPF0301 (AlgH) family.

The chain is UPF0301 protein Daro_3893 from Dechloromonas aromatica (strain RCB).